The primary structure comprises 238 residues: tRNA (guanine-N(7)-)-methyltransferase (238 aa).

Positions 68, 93, 120, and 143 each coordinate S-adenosyl-L-methionine. The active site involves Asp-143. Substrate contacts are provided by residues Lys-147, Asp-179, and 216 to 219; that span reads TKFE.

The protein belongs to the class I-like SAM-binding methyltransferase superfamily. TrmB family.

It carries out the reaction guanosine(46) in tRNA + S-adenosyl-L-methionine = N(7)-methylguanosine(46) in tRNA + S-adenosyl-L-homocysteine. It participates in tRNA modification; N(7)-methylguanine-tRNA biosynthesis. Its function is as follows. Catalyzes the formation of N(7)-methylguanine at position 46 (m7G46) in tRNA. In Stutzerimonas stutzeri (strain A1501) (Pseudomonas stutzeri), this protein is tRNA (guanine-N(7)-)-methyltransferase.